We begin with the raw amino-acid sequence, 157 residues long: Cyclic pyranopterin monophosphate synthase (157 aa).

Residues 74–76 (MCH) and 112–113 (ME) each bind substrate. Aspartate 127 is a catalytic residue.

The protein belongs to the MoaC family. In terms of assembly, homohexamer; trimer of dimers.

It catalyses the reaction (8S)-3',8-cyclo-7,8-dihydroguanosine 5'-triphosphate = cyclic pyranopterin phosphate + diphosphate. It functions in the pathway cofactor biosynthesis; molybdopterin biosynthesis. In terms of biological role, catalyzes the conversion of (8S)-3',8-cyclo-7,8-dihydroguanosine 5'-triphosphate to cyclic pyranopterin monophosphate (cPMP). The protein is Cyclic pyranopterin monophosphate synthase of Sulfurovum sp. (strain NBC37-1).